The sequence spans 130 residues: Small ribosomal subunit protein uS9 (130 aa).

The protein belongs to the universal ribosomal protein uS9 family.

This is Small ribosomal subunit protein uS9 from Magnetococcus marinus (strain ATCC BAA-1437 / JCM 17883 / MC-1).